The sequence spans 372 residues: Fatty acid 2-hydroxylase (372 aa).

One can recognise a Cytochrome b5 heme-binding domain in the interval 8–86 (AASFSPSEVQ…LEQYYVGELR (79 aa)). Residues His43 and His69 each contribute to the heme site. A run of 2 helical transmembrane segments spans residues 168-188 (VWYSVPIIWVPLVLYLSWSYY) and 213-233 (SMFPGLFMLGIFLWSLIEYLI). One can recognise a Fatty acid hydroxylase domain in the interval 219 to 361 (FMLGIFLWSL…TKLWDYCFHT (143 aa)). Zn(2+) is bound by residues His234, His239, His257, His260, and His261. Helical transmembrane passes span 271–291 (VFPPVPASLVIGVFYLCLQLI) and 292–312 (LPEAVGGTVFAGGLLGYVLYD). 5 residues coordinate Zn(2+): His315, His319, His336, His339, and His340.

This sequence belongs to the sterol desaturase family. SCS7 subfamily. The cofactor is Zn(2+).

The protein localises to the endoplasmic reticulum membrane. The protein resides in the microsome membrane. The enzyme catalyses a 1,2-saturated fatty acid + 2 Fe(II)-[cytochrome b5] + O2 + 2 H(+) = a (R)-2-hydroxy fatty acid + 2 Fe(III)-[cytochrome b5] + H2O. It catalyses the reaction hexadecanoate + 2 Fe(II)-[cytochrome b5] + O2 + 2 H(+) = (R)-2-hydroxyhexadecanoate + 2 Fe(III)-[cytochrome b5] + H2O. The catalysed reaction is octadecanoate + 2 Fe(II)-[cytochrome b5] + O2 + 2 H(+) = (R)-2-hydroxyoctadecanoate + 2 Fe(III)-[cytochrome b5] + H2O. It carries out the reaction docosanoate + 2 Fe(II)-[cytochrome b5] + O2 + 2 H(+) = 2-hydroxydocosanoate + 2 Fe(III)-[cytochrome b5] + H2O. The enzyme catalyses tetracosanoate + 2 Fe(II)-[cytochrome b5] + O2 + 2 H(+) = (R)-2-hydroxytetracosanoate + 2 Fe(III)-[cytochrome b5] + H2O. Its pathway is lipid metabolism; fatty acid metabolism. The protein operates within sphingolipid metabolism; galactosylceramide biosynthesis. Its function is as follows. Catalyzes the hydroxylation of free fatty acids at the C-2 position to produce 2-hydroxy fatty acids, which are building blocks of sphingolipids and glycosphingolipids common in neural tissue and epidermis. FA2H is stereospecific for the production of (R)-2-hydroxy fatty acids. Plays an essential role in the synthesis of galactosphingolipids of the myelin sheath. Responsible for the synthesis of sphingolipids and glycosphingolipids involved in the formation of epidermal lamellar bodies critical for skin permeability barrier. Participates in the synthesis of glycosphingolipids and a fraction of type II wax diesters in sebaceous gland, specifically regulating hair follicle homeostasis. Involved in the synthesis of sphingolipids of plasma membrane rafts, controlling lipid raft mobility and trafficking of raft-associated proteins. The sequence is that of Fatty acid 2-hydroxylase (FA2H) from Macaca fascicularis (Crab-eating macaque).